Here is a 401-residue protein sequence, read N- to C-terminus: G2/mitotic-specific cyclin-B1 (401 aa).

Disordered stretches follow at residues 1 to 30 (MALR…PTLK) and 84 to 103 (KVQV…ETSG). Positions 9–26 (RLASTRAEQGGKTCSVSG) are enriched in polar residues.

This sequence belongs to the cyclin family. Cyclin AB subfamily. As to quaternary structure, interacts with the CDK1 protein kinase to form a serine/threonine kinase holoenzyme complex also known as maturation promoting factor (MPF). The cyclin subunit imparts substrate specificity to the complex.

In terms of biological role, essential for the control of the cell cycle at the G2/M (mitosis) transition. This is G2/mitotic-specific cyclin-B1 (ccnb1) from Oryzias javanicus (Javanese ricefish).